The sequence spans 332 residues: Ribosomal RNA small subunit methyltransferase H (332 aa).

Residues 42–44 (GGH), aspartate 62, phenylalanine 86, aspartate 105, and glutamine 112 each bind S-adenosyl-L-methionine.

Belongs to the methyltransferase superfamily. RsmH family.

It is found in the cytoplasm. The enzyme catalyses cytidine(1402) in 16S rRNA + S-adenosyl-L-methionine = N(4)-methylcytidine(1402) in 16S rRNA + S-adenosyl-L-homocysteine + H(+). Its function is as follows. Specifically methylates the N4 position of cytidine in position 1402 (C1402) of 16S rRNA. This chain is Ribosomal RNA small subunit methyltransferase H, found in Cupriavidus pinatubonensis (strain JMP 134 / LMG 1197) (Cupriavidus necator (strain JMP 134)).